Consider the following 362-residue polypeptide: Lactosylceramide alpha-2,3-sialyltransferase (362 aa).

Residues 1–5 (MRRPS) lie on the Cytoplasmic side of the membrane. The chain crosses the membrane as a helical; Signal-anchor for type II membrane protein span at residues 6 to 26 (LLLKDILKCTLLVFGVWILYI). The Lumenal segment spans residues 27–362 (LKLNYTTEEC…DLSGGIDREF (336 aa)). 4 N-linked (GlcNAc...) asparagine glycosylation sites follow: asparagine 30, asparagine 180, asparagine 224, and asparagine 334. Cysteine 139 and cysteine 297 form a disulfide bridge.

This sequence belongs to the glycosyltransferase 29 family.

It is found in the golgi apparatus membrane. It catalyses the reaction a beta-D-Gal-(1-&gt;4)-beta-D-Glc-(1&lt;-&gt;1)-Cer(d18:1(4E)) + CMP-N-acetyl-beta-neuraminate = a ganglioside GM3 (d18:1(4E)) + CMP + H(+). The enzyme catalyses ganglioside GA2 (d18:1(4E)/18:0) + CMP-N-acetyl-beta-neuraminate = ganglioside GM2 (d18:1(4E)/18:0) + CMP + H(+). The catalysed reaction is a beta-D-Gal-(1&lt;-&gt;1')-ceramide + CMP-N-acetyl-beta-neuraminate = N-acetyl-alpha-neuraminosyl-(2-&gt;3)-beta-D-galactosyl-(1&lt;-&gt;1')-ceramide + CMP + H(+). It carries out the reaction ganglioside GA1 (d18:1(4E)/18:0) + CMP-N-acetyl-beta-neuraminate = ganglioside GM1 (d18:1(4E)/18:0) + CMP + H(+). Transfers the sialyl group (N-acetyl-alpha-neuraminyl or NeuAc) from CMP-NeuAc to the non-reducing terminal galactose (Gal) of glycosphingolipids forming gangliosides (important molecules involved in the regulation of multiple cellular processes, including cell proliferation and differentiation, apoptosis, embryogenesis, development, and oncogenesis). Mainly involved in the biosynthesis of ganglioside GM3 but can also use different glycolipids as substrate acceptors such as D-galactosylceramide (GalCer), asialo-GM2 (GA2) and asialo-GM1 (GA1), although less preferentially than beta-D-Gal-(1-&gt;4)-beta-D-Glc-(1&lt;-&gt;1)-Cer (LacCer). The protein is Lactosylceramide alpha-2,3-sialyltransferase (ST3GAL5) of Pan troglodytes (Chimpanzee).